Reading from the N-terminus, the 234-residue chain is RNA chaperone ProQ (234 aa).

Positions 104 to 130 (LEEAKARVQAQRDARKREAAENGEKRE) are enriched in basic and acidic residues. Positions 104-186 (LEEAKARVQA…QRSTPVTSLE (83 aa)) are disordered. Residues 131–142 (PRRPRPAGKKPT) show a composition bias toward basic residues. Composition is skewed to basic and acidic residues over residues 143 to 156 (ARRD…EVRK) and 163 to 176 (TSER…ETTE). The segment covering 177–186 (QRSTPVTSLE) has biased composition (polar residues).

The protein belongs to the ProQ family.

The protein resides in the cytoplasm. Its function is as follows. RNA chaperone with significant RNA binding, RNA strand exchange and RNA duplexing activities. May regulate ProP activity through an RNA-based, post-transcriptional mechanism. This chain is RNA chaperone ProQ, found in Edwardsiella ictaluri (strain 93-146).